Reading from the N-terminus, the 142-residue chain is Transcription antitermination protein NusB (142 aa).

Belongs to the NusB family.

Functionally, involved in transcription antitermination. Required for transcription of ribosomal RNA (rRNA) genes. Binds specifically to the boxA antiterminator sequence of the ribosomal RNA (rrn) operons. In Thermobifida fusca (strain YX), this protein is Transcription antitermination protein NusB.